A 1480-amino-acid polypeptide reads, in one-letter code: Cystic fibrosis transmembrane conductance regulator (1480 aa).

At 1-77 the chain is on the cytoplasmic side; sequence MQRSPLEKAS…KLINALRRCF (77 aa). Residues 78–98 form a helical membrane-spanning segment; that stretch reads FWRFMFYGIFLYLGEVTKAVQ. One can recognise an ABC transmembrane type-1 1 domain in the interval 81 to 365; it reads FMFYGIFLYL…WAVQTWYDSL (285 aa). Residues 99 to 122 lie on the Extracellular side of the membrane; that stretch reads PLLLGRIIASYDPDNKEERSIAIY. A helical transmembrane segment spans residues 123-146; the sequence is LGIGLCLLFIVRTLLLHPAIFGLH. Topologically, residues 147–195 are cytoplasmic; that stretch reads HIGMQMRIAMFSLIYKKTLKLSSRVLDKISIGQLVSLLSNNLNKFDEGL. A helical membrane pass occupies residues 196-216; that stretch reads ALAHFVWIAPLQVALLMGLIW. Topologically, residues 217–222 are extracellular; it reads ELLQAS. A helical membrane pass occupies residues 223–243; that stretch reads AFCGLGFLIVLALFQAGLGRM. Topologically, residues 244–298 are cytoplasmic; the sequence is MMKYRDQRAGKISERLVITSEMIENIQSVKAYCWEEAMEKMIENLRQTELKLTRK. The helical transmembrane segment at 299-319 threads the bilayer; it reads AAYVRYFNSSAFFFSGFFVVF. Residues 320-339 lie on the Extracellular side of the membrane; that stretch reads LSVLPYALIKGIILRKIFTT. Residues 340–358 form a helical membrane-spanning segment; it reads ISFCIVLRMAVTRQFPWAV. At 359–858 the chain is on the cytoplasmic side; sequence QTWYDSLGAI…YLRYITVHKS (500 aa). ATP contacts are provided by residues tryptophan 401, serine 434, 458–465, and glutamine 493; that span reads GSTGAGKT. The ABC transporter 1 domain maps to 423–646; that stretch reads NGDDSLFFSN…RPDFSSKLMG (224 aa). A lipid anchor (S-palmitoyl cysteine) is attached at cysteine 524. 2 positions are modified to phosphoserine: serine 549 and serine 660. A disordered R region region spans residues 654–831; that stretch reads SAERRNSILT…EEINEEDLKE (178 aa). At serine 670 the chain carries Phosphoserine; by PKA. Serine 686 bears the Phosphoserine mark. A Glycyl lysine isopeptide (Lys-Gly) (interchain with G-Cter in ubiquitin) cross-link involves residue lysine 688. Phosphoserine occurs at positions 700 and 712. Threonine 717 carries the phosphothreonine modification. Phosphoserine is present on residues serine 737, serine 753, serine 768, serine 790, serine 795, and serine 813. A helical transmembrane segment spans residues 859 to 879; the sequence is LIFVLIWCLVIFLAEVAASLV. Residues 859–1155 enclose the ABC transmembrane type-1 2 domain; sequence LIFVLIWCLV…AVNSSIDVDS (297 aa). Topologically, residues 880 to 918 are extracellular; sequence VLWLLGNTPLQDKGNSTHSRNNSYAVIITSTSSYYVFYI. Residues asparagine 894 and asparagine 900 are each glycosylated (N-linked (GlcNAc...) asparagine). The chain crosses the membrane as a discontinuously helical span at residues 919 to 939; that stretch reads YVGVADTLLAMGFFRGLPLVH. Residues 940–990 lie on the Cytoplasmic side of the membrane; it reads TLITVSKILHHKMLHSVLQAPMSTLNTLKAGGILNRFSKDIAILDDLLPLT. Residues 991–1011 form a helical membrane-spanning segment; it reads IFDFIQLLLIVIGAIAVVAVL. Over 1012–1013 the chain is Extracellular; it reads QP. A helical transmembrane segment spans residues 1014–1034; that stretch reads YIFVATVPVIVAFIMLRAYFL. Residues 1035-1095 lie on the Cytoplasmic side of the membrane; that stretch reads QTSQQLKQLE…TANWFLYLST (61 aa). The helical transmembrane segment at 1096–1116 threads the bilayer; sequence LRWFQMRIEMIFVIFFIAVTF. At 1117–1130 the chain is on the extracellular side; the sequence is ISILTTGEGEGRVG. The helical transmembrane segment at 1131-1151 threads the bilayer; it reads IILTLAMNIMSTLQWAVNSSI. Topologically, residues 1152–1480 are cytoplasmic; sequence DVDSLMRSVS…TEEEVQDTRL (329 aa). Residues 1210–1443 enclose the ABC transporter 2 domain; that stretch reads MTVKDLTAKY…RSLFRQAISP (234 aa). ATP contacts are provided by residues tyrosine 1219 and 1244–1251; that span reads GRTGSGKS. Residues 1386–1480 form an interaction with GORASP2 region; the sequence is RTLKQAFADC…TEEEVQDTRL (95 aa). The S-palmitoyl cysteine moiety is linked to residue cysteine 1395. Residues serine 1444 and serine 1456 each carry the phosphoserine modification. The disordered stretch occupies residues 1452-1480; that stretch reads HRNSSKCKSKPQIAALKEETEEEVQDTRL. Positions 1470–1480 are enriched in acidic residues; it reads ETEEEVQDTRL. A PDZ-binding motif is present at residues 1478–1480; the sequence is TRL.

Belongs to the ABC transporter superfamily. ABCC family. CFTR transporter (TC 3.A.1.202) subfamily. In terms of assembly, monomer; does not require oligomerization for channel activity. May form oligomers in the membrane. Interacts with SLC26A3, SLC26A6 and NHERF1. Interacts with SHANK2. Interacts with MYO6. Interacts (via C-terminus) with GOPC (via PDZ domain); this promotes CFTR internalization and thereby decreases channel activity. Interacts with SLC4A7 through NHERF1. Found in a complex with MYO5B and RAB11A. Interacts with ANO1. Interacts with SLC26A8. Interacts with AHCYL1; the interaction increases CFTR activity. Interacts with CSE1L. The core-glycosylated form interacts with GORASP2 (via PDZ GRASP-type 1 domain) in respone to ER stress. Interacts with MARCHF2; the interaction leads to CFTR ubiqtuitination and degradation. Interacts with ADGRG2. In terms of processing, N-glycosylated. Post-translationally, phosphorylated; cAMP treatment promotes phosphorylation and activates the channel. Dephosphorylation decreases the ATPase activity (in vitro). Phosphorylation at PKA sites activates the channel. Phosphorylation at PKC sites enhances the response to phosphorylation by PKA. Phosphorylated by AMPK; this inhibits channel activity. Ubiquitinated, leading to its degradation in the lysosome. Deubiquitination by USP10 in early endosomes enhances its endocytic recycling to the cell membrane. Ubiquitinated by RNF185 during ER stress. Ubiquitinated by MARCHF2.

It is found in the apical cell membrane. Its subcellular location is the early endosome membrane. The protein localises to the cell membrane. The protein resides in the recycling endosome membrane. It localises to the endoplasmic reticulum membrane. It is found in the nucleus. The enzyme catalyses ATP + H2O + closed Cl(-) channel = ADP + phosphate + open Cl(-) channel.. It carries out the reaction chloride(in) = chloride(out). The catalysed reaction is hydrogencarbonate(in) = hydrogencarbonate(out). It catalyses the reaction ATP + H2O = ADP + phosphate + H(+). Functionally, epithelial ion channel that plays an important role in the regulation of epithelial ion and water transport and fluid homeostasis. Mediates the transport of chloride ions across the cell membrane. Possesses an intrinsic ATPase activity and utilizes ATP to gate its channel; the passive flow of anions through the channel is gated by cycles of ATP binding and hydrolysis by the ATP-binding domains. The ion channel is also permeable to HCO(3)(-); selectivity depends on the extracellular chloride concentration. Exerts its function also by modulating the activity of other ion channels and transporters. Contributes to the regulation of the pH and the ion content of the epithelial fluid layer. Modulates the activity of the epithelial sodium channel (ENaC) complex, in part by regulating the cell surface expression of the ENaC complex. May regulate bicarbonate secretion and salvage in epithelial cells by regulating the transporter SLC4A7. Can inhibit the chloride channel activity of ANO1. Plays a role in the chloride and bicarbonate homeostasis during sperm epididymal maturation and capacitation. This Pan troglodytes (Chimpanzee) protein is Cystic fibrosis transmembrane conductance regulator.